A 136-amino-acid polypeptide reads, in one-letter code: Large ribosomal subunit protein uL16 (136 aa).

The protein belongs to the universal ribosomal protein uL16 family. In terms of assembly, part of the 50S ribosomal subunit.

Its function is as follows. Binds 23S rRNA and is also seen to make contacts with the A and possibly P site tRNAs. The chain is Large ribosomal subunit protein uL16 from Serratia proteamaculans (strain 568).